The chain runs to 157 residues: Endoribonuclease YbeY (157 aa).

Residues histidine 116, histidine 120, and histidine 126 each contribute to the Zn(2+) site.

Belongs to the endoribonuclease YbeY family. The cofactor is Zn(2+).

The protein localises to the cytoplasm. Its function is as follows. Single strand-specific metallo-endoribonuclease involved in late-stage 70S ribosome quality control and in maturation of the 3' terminus of the 16S rRNA. This Paenarthrobacter aurescens (strain TC1) protein is Endoribonuclease YbeY.